Here is a 349-residue protein sequence, read N- to C-terminus: Histidinol-phosphate aminotransferase (349 aa).

K206 carries the post-translational modification N6-(pyridoxal phosphate)lysine.

Belongs to the class-II pyridoxal-phosphate-dependent aminotransferase family. Histidinol-phosphate aminotransferase subfamily. In terms of assembly, homodimer. Pyridoxal 5'-phosphate is required as a cofactor.

The catalysed reaction is L-histidinol phosphate + 2-oxoglutarate = 3-(imidazol-4-yl)-2-oxopropyl phosphate + L-glutamate. The protein operates within amino-acid biosynthesis; L-histidine biosynthesis; L-histidine from 5-phospho-alpha-D-ribose 1-diphosphate: step 7/9. This is Histidinol-phosphate aminotransferase from Hydrogenobaculum sp. (strain Y04AAS1).